We begin with the raw amino-acid sequence, 272 residues long: Rhomboid-type serine protease B (272 aa).

Helical transmembrane passes span 30 to 50 (IVLL…WSVV), 72 to 92 (PFIH…TPLL), 103 to 123 (TAVA…YILV), 133 to 153 (AVVG…IKTF), and 164 to 184 (TKIP…IFVP). S138 serves as the catalytic Nucleophile. N185 carries N-linked (GlcNAc...) asparagine glycosylation. The chain crosses the membrane as a helical span at residues 186–206 (TSFLGHLSAIIIGYLLGLGYL). H191 is an active-site residue.

Belongs to the peptidase S54 family.

The protein resides in the membrane. The enzyme catalyses Cleaves type-1 transmembrane domains using a catalytic dyad composed of serine and histidine that are contributed by different transmembrane domains.. Functionally, rhomboid protease that catalyzes intramembrane proteolysis. Required for transcription factor srbA activation by mediating its release from the membrane and thereby regulating its activity under hypoxic conditions. Essential for iron homeostasis and resistance to azoles such as voriconazole. Required for virulence in murine models of invasive pulmonary aspergillosis (IPA). The polypeptide is Rhomboid-type serine protease B (Aspergillus fumigatus (strain CBS 144.89 / FGSC A1163 / CEA10) (Neosartorya fumigata)).